A 127-amino-acid chain; its full sequence is Aspartate 1-decarboxylase (127 aa).

The Schiff-base intermediate with substrate; via pyruvic acid role is filled by Ser25. At Ser25 the chain carries Pyruvic acid (Ser). Thr57 is a binding site for substrate. Tyr58 serves as the catalytic Proton donor. Position 73 to 75 (73 to 75 (GAA)) interacts with substrate.

The protein belongs to the PanD family. As to quaternary structure, heterooctamer of four alpha and four beta subunits. The cofactor is pyruvate. In terms of processing, is synthesized initially as an inactive proenzyme, which is activated by self-cleavage at a specific serine bond to produce a beta-subunit with a hydroxyl group at its C-terminus and an alpha-subunit with a pyruvoyl group at its N-terminus.

The protein localises to the cytoplasm. The enzyme catalyses L-aspartate + H(+) = beta-alanine + CO2. It functions in the pathway cofactor biosynthesis; (R)-pantothenate biosynthesis; beta-alanine from L-aspartate: step 1/1. In terms of biological role, catalyzes the pyruvoyl-dependent decarboxylation of aspartate to produce beta-alanine. The chain is Aspartate 1-decarboxylase from Vesicomyosocius okutanii subsp. Calyptogena okutanii (strain HA).